The sequence spans 94 residues: Small ribosomal subunit protein bS18c (94 aa).

Belongs to the bacterial ribosomal protein bS18 family. In terms of assembly, part of the 30S ribosomal subunit.

The protein localises to the plastid. It is found in the chloroplast. This Manihot esculenta (Cassava) protein is Small ribosomal subunit protein bS18c.